Here is a 1194-residue protein sequence, read N- to C-terminus: Phosphatidylinositol-3,5-bisphosphate 3-phosphatase MTMR3 (1194 aa).

Phosphoserine is present on S4. Positions 151–572 (EHVTSRFKNE…RNLMLWSAVY (422 aa)) constitute a Myotubularin phosphatase domain. Positions 322, 347, and 348 each coordinate a 1,2-diacyl-sn-glycero-3-phospho-(1D-myo-inositol-3,5-bisphosphate). 3 residues coordinate a 1,2-diacyl-sn-glycero-3-phospho-(1D-myo-inositol-3-phosphate): N322, N347, and I348. Residue C409 is the Phosphocysteine intermediate of the active site. Positions 410, 411, 412, 413, 414, 415, 451, and 455 each coordinate a 1,2-diacyl-sn-glycero-3-phospho-(1D-myo-inositol-3,5-bisphosphate). The a 1,2-diacyl-sn-glycero-3-phospho-(1D-myo-inositol-3-phosphate) site is built by S410, D411, G412, W413, D414, and R415. R455 is an a 1,2-diacyl-sn-glycero-3-phospho-(1D-myo-inositol-3-phosphate) binding site. Residues 583-609 (DDSCAPYPAPGTSPDEPPLSRLPKTRS) form a disordered region. The span at 589-599 (YPAPGTSPDEP) shows a compositional bias: pro residues. Phosphoserine occurs at positions 609, 629, 643, and 647. Residues 693-724 (TKEESGVEEPTHREHTEVPEVKEEAPLAKESR) show a composition bias toward basic and acidic residues. 3 disordered regions span residues 693-731 (TKEE…QGSG), 852-871 (ESGP…RFSG), and 876-897 (PIAP…HRTS). Phosphothreonine is present on T725. S904 bears the Phosphoserine mark. Disordered regions lie at residues 932 to 971 (NKAS…HQLS) and 988 to 1017 (KWLN…DGMP). Over residues 991–1006 (NSHSGRPSTTNSPEQP) the composition is skewed to polar residues. Positions 1025–1058 (QRLRQIESGHQQEVETLKKQVQELKSRLESQYLT) form a coiled coil. Position 1060 is a phosphoserine (S1060). The FYVE-type zinc finger occupies 1115-1175 (DHLAAHCYAC…VCKSCYSSLH (61 aa)). The Zn(2+) site is built by C1121, C1124, C1137, C1140, C1145, C1148, C1167, and C1170.

This sequence belongs to the protein-tyrosine phosphatase family. Non-receptor class myotubularin subfamily. Forms heterodimers with MTMR4 that recruit both CEP55 and PLK1; occurs during early mitosis, regulates the phosphorylation of CEP55 by PLK1 and its recruitment to the midbody where it mediates cell abscission.

Its subcellular location is the cytoplasm. It is found in the cytosol. The protein resides in the membrane. The catalysed reaction is a 1,2-diacyl-sn-glycero-3-phospho-(1D-myo-inositol-3,5-bisphosphate) + H2O = a 1,2-diacyl-sn-glycero-3-phospho-(1D-myo-inositol-5-phosphate) + phosphate. The enzyme catalyses a 1,2-diacyl-sn-glycero-3-phospho-(1D-myo-inositol-3-phosphate) + H2O = a 1,2-diacyl-sn-glycero-3-phospho-(1D-myo-inositol) + phosphate. It catalyses the reaction 1,2-dihexadecanoyl-sn-glycero-3-phospho-(1D-myo-inositol-3-phosphate) + H2O = 1,2-dihexadecanoyl-sn-glycero-3-phospho-(1D-myo-inositol) + phosphate. It carries out the reaction 1,2-dioctanoyl-sn-glycero-3-phospho-(1-D-myo-inositol-3-phosphate) + H2O = 1,2-dioctanoyl-sn-glycero-3-phospho-(1D-myo-inositol) + phosphate. The catalysed reaction is 1,2-dihexadecanoyl-sn-glycero-3-phospho-(1D-myo-inositol-3,5-phosphate) + H2O = 1,2-dihexadecanoyl-sn-glycero-3-phospho-(1D-myo-inositol-5-phosphate) + phosphate. Lipid phosphatase that specifically dephosphorylates the D-3 position of phosphatidylinositol 3-phosphate and phosphatidylinositol 3,5-bisphosphate, generating phosphatidylinositol and phosphatidylinositol 5-phosphate. Decreases the levels of phosphatidylinositol 3-phosphate, a phospholipid found in cell membranes where it acts as key regulator of both cell signaling and intracellular membrane traffic. Could also have a molecular sequestering/adapter activity and regulate biological processes independently of its phosphatase activity. It includes the regulation of midbody abscission during mitotic cytokinesis. The sequence is that of Phosphatidylinositol-3,5-bisphosphate 3-phosphatase MTMR3 from Rattus norvegicus (Rat).